The primary structure comprises 120 residues: Large ribosomal subunit protein uL18 (120 aa).

This sequence belongs to the universal ribosomal protein uL18 family. Part of the 50S ribosomal subunit; part of the 5S rRNA/L5/L18/L25 subcomplex. Contacts the 5S and 23S rRNAs.

Functionally, this is one of the proteins that bind and probably mediate the attachment of the 5S RNA into the large ribosomal subunit, where it forms part of the central protuberance. The chain is Large ribosomal subunit protein uL18 from Brevibacillus brevis (strain 47 / JCM 6285 / NBRC 100599).